A 223-amino-acid polypeptide reads, in one-letter code: UPF0441 protein YgiB (223 aa).

Low complexity predominate over residues 178 to 195 (TVPKTAMAPKPATTTTVT). The segment at 178–223 (TVPKTAMAPKPATTTTVTRGGFGESVAKQSTMQRSAAGTSTRSMGG) is disordered. Over residues 204–223 (AKQSTMQRSAAGTSTRSMGG) the composition is skewed to polar residues.

It belongs to the UPF0441 family.

This Salmonella paratyphi B (strain ATCC BAA-1250 / SPB7) protein is UPF0441 protein YgiB.